A 217-amino-acid polypeptide reads, in one-letter code: Putative thymidylate synthase (217 aa).

Residue cysteine 139 is part of the active site.

The protein belongs to the thymidylate synthase family. Archaeal-type ThyA subfamily. In terms of assembly, monomer.

The protein localises to the cytoplasm. It participates in pyrimidine metabolism; dTTP biosynthesis. May catalyze the biosynthesis of dTMP using an unknown cosubstrate. The chain is Putative thymidylate synthase from Methanosarcina acetivorans (strain ATCC 35395 / DSM 2834 / JCM 12185 / C2A).